The chain runs to 190 residues: Elongation factor P-like protein (190 aa).

This sequence belongs to the elongation factor P family.

This Erwinia tasmaniensis (strain DSM 17950 / CFBP 7177 / CIP 109463 / NCPPB 4357 / Et1/99) protein is Elongation factor P-like protein.